The sequence spans 182 residues: Peptide deformylase (182 aa).

2 residues coordinate Fe cation: Cys-110 and His-153. The active site involves Glu-154. His-157 contributes to the Fe cation binding site.

The protein belongs to the polypeptide deformylase family. It depends on Fe(2+) as a cofactor.

The catalysed reaction is N-terminal N-formyl-L-methionyl-[peptide] + H2O = N-terminal L-methionyl-[peptide] + formate. In terms of biological role, removes the formyl group from the N-terminal Met of newly synthesized proteins. Requires at least a dipeptide for an efficient rate of reaction. N-terminal L-methionine is a prerequisite for activity but the enzyme has broad specificity at other positions. The chain is Peptide deformylase from Halalkalibacterium halodurans (strain ATCC BAA-125 / DSM 18197 / FERM 7344 / JCM 9153 / C-125) (Bacillus halodurans).